Here is a 143-residue protein sequence, read N- to C-terminus: S-adenosylmethionine decarboxylase proenzyme (143 aa).

Catalysis depends on Ser66, which acts as the Schiff-base intermediate with substrate; via pyruvic acid. Ser66 carries the post-translational modification Pyruvic acid (Ser); by autocatalysis. His71 serves as the catalytic Proton acceptor; for processing activity. Residue Cys86 is the Proton donor; for catalytic activity of the active site.

The protein belongs to the prokaryotic AdoMetDC family. Type 1 subfamily. In terms of assembly, heterotetramer of two alpha and two beta chains arranged as a dimer of alpha/beta heterodimers. Pyruvate is required as a cofactor. Is synthesized initially as an inactive proenzyme. Formation of the active enzyme involves a self-maturation process in which the active site pyruvoyl group is generated from an internal serine residue via an autocatalytic post-translational modification. Two non-identical subunits are generated from the proenzyme in this reaction, and the pyruvate is formed at the N-terminus of the alpha chain, which is derived from the carboxyl end of the proenzyme. The post-translation cleavage follows an unusual pathway, termed non-hydrolytic serinolysis, in which the side chain hydroxyl group of the serine supplies its oxygen atom to form the C-terminus of the beta chain, while the remainder of the serine residue undergoes an oxidative deamination to produce ammonia and the pyruvoyl group blocking the N-terminus of the alpha chain.

It catalyses the reaction S-adenosyl-L-methionine + H(+) = S-adenosyl 3-(methylsulfanyl)propylamine + CO2. Its pathway is amine and polyamine biosynthesis; S-adenosylmethioninamine biosynthesis; S-adenosylmethioninamine from S-adenosyl-L-methionine: step 1/1. In terms of biological role, catalyzes the decarboxylation of S-adenosylmethionine to S-adenosylmethioninamine (dcAdoMet), the propylamine donor required for the synthesis of the polyamines spermine and spermidine from the diamine putrescine. This chain is S-adenosylmethionine decarboxylase proenzyme, found in Thermococcus kodakarensis (strain ATCC BAA-918 / JCM 12380 / KOD1) (Pyrococcus kodakaraensis (strain KOD1)).